The sequence spans 60 residues: MSQKTVKVQLVRSLIGTREDHRATVRGLGLRRMNSVSELQDTPAVRGMINKVSYLVKVIG.

Belongs to the universal ribosomal protein uL30 family. Part of the 50S ribosomal subunit.

The sequence is that of Large ribosomal subunit protein uL30 from Ralstonia pickettii (strain 12J).